Here is a 716-residue protein sequence, read N- to C-terminus: Iron-sulfur clusters transporter atm1, mitochondrial (716 aa).

The transit peptide at 1-18 (MAPSIKLSTMATSLHRAH) directs the protein to the mitochondrion. Residues 19–123 (GTSALLRRPR…PKGSWGDKAR (105 aa)) lie on the Mitochondrial matrix side of the membrane. Residues 57-87 (LFAPNGSAKDESKPAVSTVPKTTGRGPSDPL) form a disordered region. Residues 124 to 145 (VLLAIGLLVGGKVLNVQVPFYF) traverse the membrane as a helical segment. An ABC transmembrane type-1 domain is found at 124–414 (VLLAIGLLVG…LGSVYRELRQ (291 aa)). The Mitochondrial intermembrane segment spans residues 146–168 (REIVDSLNIDFSTTGGSVTAVAG). The helical transmembrane segment at 169–192 (AMILGYGAARVGAVVSQELRNAVF) threads the bilayer. Over 193 to 241 (ASVAQKAIRKVARNTFEHLLNLDLSFHLSKQTGGLTRAIDRGTKGISFL) the chain is Mitochondrial matrix. A helical membrane pass occupies residues 242–265 (LTSMVFHIVPTALEISMVCGILTY). Position 266 (Asn-266) is a topological domain, mitochondrial intermembrane. Residues 267-287 (FGWQYAALTALTMVSYTAFTI) traverse the membrane as a helical segment. Residues 288–353 (LTTAWRTKFR…NSIKVATSLA (66 aa)) lie on the Mitochondrial matrix side of the membrane. Residues 293-297 (RTKFR) and 356-359 (NSGQ) contribute to the glutathione site. Residues 354–372 (FLNSGQNIIFSSALTVMMY) form a helical membrane-spanning segment. The Mitochondrial intermembrane segment spans residues 373–387 (MGAHGVATGQLTVGD). The chain crosses the membrane as a helical span at residues 388 to 409 (LVLINQLVFQLSVPLNFLGSVY). Residue Gly-406 participates in glutathione binding. The Mitochondrial matrix segment spans residues 410 to 716 (RELRQSLLDM…KEEVGEKKEA (307 aa)). Positions 449 to 690 (IEFKDVTFGY…NGVYAQLWRA (242 aa)) constitute an ABC transporter domain. ATP contacts are provided by residues Tyr-458 and 482-493 (GPSGCGKSTLLR). Positions 697–716 (EEGEVSKKGEKEEVGEKKEA) are disordered. Residues 700 to 716 (EVSKKGEKEEVGEKKEA) are compositionally biased toward basic and acidic residues.

It belongs to the ABC transporter superfamily. ABCB family. Heavy Metal importer (TC 3.A.1.210) subfamily. Homodimer.

It is found in the mitochondrion inner membrane. In terms of biological role, performs an essential function in the generation of cytoplasmic iron-sulfur proteins by mediating the ATP-dependent export of Fe/S cluster precursors synthesized by egt-3 and other mitochondrial proteins. Hydrolyzes ATP. Binds glutathione and may function by transporting a glutathione-conjugated iron-sulfur compound. The sequence is that of Iron-sulfur clusters transporter atm1, mitochondrial from Neurospora crassa (strain ATCC 24698 / 74-OR23-1A / CBS 708.71 / DSM 1257 / FGSC 987).